We begin with the raw amino-acid sequence, 313 residues long: Protein FixB (313 aa).

255-283 (LYLAVGISGQIQHMVGANASQTIFAINKD) is an FAD binding site.

The protein belongs to the ETF alpha-subunit/FixB family. As to quaternary structure, heterodimer of FixA and FixB.

It functions in the pathway amine and polyamine metabolism; carnitine metabolism. Its function is as follows. Required for anaerobic carnitine reduction. May bring reductant to CaiA. The polypeptide is Protein FixB (Escherichia coli O157:H7).